A 427-amino-acid polypeptide reads, in one-letter code: A-kinase anchor protein 5 (427 aa).

The segment at Met1 to Lys122 is disordered. Residues Met1–Asn170 form an essential to the intracellular anchoring function region. Over residues Ile8–Ala19 the composition is skewed to basic and acidic residues. Ser22 is subject to Phosphoserine. The S-palmitoyl cysteine moiety is linked to residue Cys36. Basic residues predominate over residues Phe37 to Lys48. An AKAP CaM-binding motif is present at residues Arg76–Lys96. The span at Ser92 to Glu102 shows a compositional bias: basic and acidic residues. Cys129 is lipidated: S-palmitoyl cysteine. Composition is skewed to polar residues over residues Asp171–Leu182 and Val242–Thr252. Disordered regions lie at residues Asp171–Ser205, Lys239–Pro269, and Ser281–Lys333. Residues Glu302–Lys333 show a composition bias toward basic and acidic residues. Residues Leu392–Gln405 form a PKA-RII subunit binding domain region. Residues Gln410–Gln427 form a tethers NFATC2 to CRAC channels region.

In terms of assembly, binding protein for dimer of the RII-beta regulatory subunit of cAMP-dependent protein kinase (PKA) and also for the protein kinase C (PKC) and the phosphatase calcineurin (PP2B). Each enzyme is inhibited when bound to the anchoring protein. Also binds the beta2-adrenergic receptor. Part of a complex containing AKAP5, ADCY5, ADCY6 and PDE4C. Interacts with ADCY8, and enhances its phosphorylation at lipid rafts. Interacts with ORAI1 (isoform alpha) (via N-terminus) upon store depletion and in response to LTC4. Does not interact with ORAI2 and ORAI3 paralogs. Interacts (via leucine zipper domain) with NFATC2/NFAT1. Interacts with calmodulin; the interaction is calcium-independent. Interacts with KCNQ2; the interaction may help KCNQ2 channel complex to retain calcium-bound calmodulin. Interacts with KCNK2; the channel is recruited to postsynaptic microdomains by AKAP5 where it can integrate neurotransmitter receptor signals. Part of a complex composed of AKAP5 and ADRB2. In terms of processing, palmitoylated. Palmitoylation at Cys-36 and Cys-129 play a key role in the targeting of AKAP5 to lipid rafts. Palmitoylation by ZDHHC2 is required for AKAP5 function in LTP-stimulated recycling endosome exocytosis. Predominantly in the cerebral cortex and the postsynaptic densities of the forebrain, and to a lesser extent in adrenal medulla, lung and anterior pituitary.

It localises to the postsynaptic recycling endosome membrane. The protein resides in the cell projection. It is found in the dendrite. The protein localises to the postsynaptic cell membrane. Its function is as follows. Multivalent scaffold protein that anchors the cAMP-dependent protein kinase/PKA to cytoskeletal and/or organelle-associated proteins, targeting the signal carried by cAMP to specific intracellular effectors. Association with the beta2-adrenergic receptor (beta2-AR) not only regulates beta2-AR signaling pathway, but also the activation by PKA by switching off the beta2-AR signaling cascade. Plays a role in long term synaptic potentiation by regulating protein trafficking from the dendritic recycling endosomes to the plasma membrane and controlling both structural and functional plasticity at excitatory synapses. In hippocampal pyramidal neurons, recruits KCNK2/TREK-1 channel at postsynaptic dense bodies microdomains and converts it to a leak channel no longer sensitive to stimulation by arachidonic acid, acidic pH or mechanical stress, nor inhibited by Gq-coupled receptors but still under the negative control of Gs-coupled receptors. Associates with ORAI1 pore-forming subunit of CRAC channels in Ca(2+) signaling microdomains where it recruits NFATC2/NFAT1 and couples store-operated Ca(2+) influx to calmodulin and calcineurin signaling and activation of NFAT-dependent transcriptional responses. This chain is A-kinase anchor protein 5 (AKAP5), found in Homo sapiens (Human).